The sequence spans 103 residues: Cytochrome c55X (103 aa).

The N-terminal stretch at 1 to 17 (MARLALLLVLLAGTAVA) is a signal peptide. The heme c site is built by Cys-36, Cys-39, and His-40.

In terms of processing, binds 1 heme c group covalently per subunit.

It localises to the periplasm. Monoheme c-type cytochrome. In Paracoccus denitrificans (strain Pd 1222), this protein is Cytochrome c55X (nirC).